The chain runs to 526 residues: Peptide chain release factor 3 (526 aa).

In terms of domain architecture, tr-type G spans 8–277 (SKRRTFAIIS…GLTRWAPAPQ (270 aa)). GTP is bound by residues 17–24 (SHPDAGKT), 85–89 (DTPGH), and 139–142 (NKLD).

It belongs to the TRAFAC class translation factor GTPase superfamily. Classic translation factor GTPase family. PrfC subfamily.

It is found in the cytoplasm. In terms of biological role, increases the formation of ribosomal termination complexes and stimulates activities of RF-1 and RF-2. It binds guanine nucleotides and has strong preference for UGA stop codons. It may interact directly with the ribosome. The stimulation of RF-1 and RF-2 is significantly reduced by GTP and GDP, but not by GMP. In Vibrio atlanticus (strain LGP32) (Vibrio splendidus (strain Mel32)), this protein is Peptide chain release factor 3.